A 256-amino-acid chain; its full sequence is GDSL esterase/lipase At1g18120 (256 aa).

Positions 1–49 are cleaved as a signal peptide; it reads MYRVYKNNKFILISIPRITNKLWQKNCNLVILLGVLLVLTLFHDPIIVA. The active-site Nucleophile is S67. N-linked (GlcNAc...) asparagine glycosylation occurs at N181.

This sequence belongs to the 'GDSL' lipolytic enzyme family.

It is found in the secreted. The sequence is that of GDSL esterase/lipase At1g18120 from Arabidopsis thaliana (Mouse-ear cress).